A 461-amino-acid polypeptide reads, in one-letter code: Glycine--tRNA ligase (461 aa).

2 residues coordinate substrate: arginine 100 and glutamate 163. ATP-binding positions include 195 to 197, 205 to 210, 282 to 283, and 326 to 329; these read RNE, FRTREF, EL, and GLGR. 210–214 lines the substrate pocket; it reads FEQME. Position 322–326 (322–326) interacts with substrate; sequence EPAAG.

The protein belongs to the class-II aminoacyl-tRNA synthetase family. In terms of assembly, homodimer.

It localises to the cytoplasm. It carries out the reaction tRNA(Gly) + glycine + ATP = glycyl-tRNA(Gly) + AMP + diphosphate. Catalyzes the attachment of glycine to tRNA(Gly). In Corynebacterium glutamicum (strain ATCC 13032 / DSM 20300 / JCM 1318 / BCRC 11384 / CCUG 27702 / LMG 3730 / NBRC 12168 / NCIMB 10025 / NRRL B-2784 / 534), this protein is Glycine--tRNA ligase.